We begin with the raw amino-acid sequence, 946 residues long: Bifunctional lysine-specific demethylase and histidyl-hydroxylase NO66 (946 aa).

Positions 14–435 (YRGSATSKNY…TSAASKKNTV (422 aa)) are disordered. Composition is skewed to polar residues over residues 17 to 28 (SATSKNYVQKGT) and 37 to 46 (AKNNNRNLAS). The span at 59 to 73 (SGSYSDGDNGSSSSS) shows a compositional bias: low complexity. Over residues 99 to 110 (TLNNHSSQSSPE) the composition is skewed to polar residues. Basic and acidic residues predominate over residues 117–128 (ESLKRRNDEAEG). Over residues 169 to 186 (TLNSHSSQSSPETPANTR) the composition is skewed to polar residues. A compositionally biased stretch (basic and acidic residues) spans 187-198 (ESLKRRTDEAEG). The span at 239–256 (TLNSHSYQSSPETPANTR) shows a compositional bias: polar residues. The span at 257-268 (ESLKRRTDEAEG) shows a compositional bias: basic and acidic residues. Thr-309 carries the phosphothreonine modification. Polar residues predominate over residues 309–327 (TLNSHSSQSSPETPANTRE). A compositionally biased stretch (basic and acidic residues) spans 328-338 (SLNRRNYEAEG). Position 339 is a phosphoserine (Ser-339). Positions 379–397 (TLNSHSSQSSPETPANTRE) are enriched in polar residues. The segment covering 398 to 408 (SLNRRNYEAEG) has biased composition (basic and acidic residues). The span at 416-433 (RTSSTPVGQSTSAASKKN) shows a compositional bias: polar residues. In terms of domain architecture, JmjC spans 606–742 (NPSSYLVQLR…NLMEKLMPLV (137 aa)). Fe cation-binding residues include His-646, Asp-648, and His-708.

The protein belongs to the ROX family. NO66 subfamily. Fe(2+) serves as cofactor.

It is found in the nucleus. The catalysed reaction is N(6),N(6)-dimethyl-L-lysyl(36)-[histone H3] + 2 2-oxoglutarate + 2 O2 = L-lysyl(36)-[histone H3] + 2 formaldehyde + 2 succinate + 2 CO2. Functionally, oxygenase that can act as both a histone lysine demethylase and a ribosomal histidine hydroxylase. Specifically demethylates 'Lys-4' (H3K4me) and 'Lys-36' (H3K36me) of histone H3, thereby playing a central role in histone code. In Drosophila pseudoobscura pseudoobscura (Fruit fly), this protein is Bifunctional lysine-specific demethylase and histidyl-hydroxylase NO66.